We begin with the raw amino-acid sequence, 479 residues long: Ammonium transporter Rh type C (479 aa).

The Cytoplasmic segment spans residues 1–9 (MAWNTNLRW). The helical transmembrane segment at 10-30 (RLPLTCLLLQVAMVILFGVFV) threads the bilayer. The Extracellular portion of the chain corresponds to 31–60 (RYDFDADAHWWTERKHKNLSEVENEFYYRY). Residue Asn-48 is glycosylated (N-linked (GlcNAc...) asparagine). The helical transmembrane segment at 61-81 (PSFQDVHVMVFVGFGFLMTFL) threads the bilayer. At 82-85 (QRYG) the chain is on the cytoplasmic side. The chain crosses the membrane as a helical span at residues 86–106 (FSAVGFNFLLAAFGIQWALLM). Residues 107–123 (QGWFHFLEGRYIVVGVE) are Extracellular-facing. Residues 124–144 (NLINADFCVASVCVAFGAVLG) form a helical membrane-spanning segment. Topologically, residues 145–148 (KVSP) are cytoplasmic. Residues 149–169 (IQLLIMTFFQVTLFAVNEFIL) traverse the membrane as a helical segment. Residues 170-177 (LNLLKVKD) lie on the Extracellular side of the membrane. Residues 178–200 (AGGSMTIHTFYAYFELTVTRILY) traverse the membrane as a helical segment. Over 201–218 (RRNLEQSKERQSSAYQSD) the chain is Cytoplasmic. The helical transmembrane segment at 219–239 (LFAMIGTLFLWMYWPSFNSAI) threads the bilayer. Topologically, residues 240–250 (SYHGDSQHRAA) are extracellular. The chain crosses the membrane as a helical span at residues 251–271 (INTYCSLAACVLTSVAVSSAL). Residues 272–281 (HKKGKLDMVH) lie on the Cytoplasmic side of the membrane. Residues 282–302 (IQNATLAGGVAVGTTAEMMLM) form a helical membrane-spanning segment. Position 303 (Pro-303) is a topological domain, extracellular. Residues 304-324 (YGALIIGFICGIISTLGFVYL) form a helical membrane-spanning segment. Over 325-345 (TPFLESRLHIQDTCGINNLHG) the chain is Cytoplasmic. The chain crosses the membrane as a helical span at residues 346 to 366 (IPGIIGGIVGAVTAASASLEV). The Extracellular portion of the chain corresponds to 367–394 (YGKEGLVHSFDFQDFKRDWTARTQGKFQ). A helical membrane pass occupies residues 395–415 (IYGLLVTLAMALMGGIIVGLI). Residues 416-479 (LRLPFWGQPS…PMASSVPLVP (64 aa)) lie on the Cytoplasmic side of the membrane.

The protein belongs to the ammonium transporter (TC 2.A.49) family. Rh subfamily. Homotrimer. Post-translationally, N-glycosylated.

Its subcellular location is the apical cell membrane. The catalysed reaction is NH4(+)(in) = NH4(+)(out). The enzyme catalyses methylamine(out) = methylamine(in). It carries out the reaction CO2(out) = CO2(in). Ammonium transporter involved in the maintenance of acid-base homeostasis. Transports ammonium and its related derivative methylammonium across the plasma membrane of epithelial cells likely contributing to renal transepithelial ammonia transport and ammonia metabolism. Postulated to primarily mediate an electroneutral bidirectional transport of NH3 ammonia species according to a mechanism that implies interaction of an NH4(+) ion with acidic residues of the pore entry followed by dissociation of NH4(+) into NH3 and H(+). As a result NH3 transits through the central pore and is protonated on the extracellular side reforming NH4(+). May act as a CO2 channel providing for renal acid secretion. The protein is Ammonium transporter Rh type C (RHCG) of Macaca mulatta (Rhesus macaque).